The sequence spans 1941 residues: Xin actin-binding repeat-containing protein 1 (1941 aa).

The tract at residues 1–41 is disordered; it reads MAEPQKSSKVAIKKMEDDLPPPPIPDSIQVIAPASQDPNPL. Xin repeat units follow at residues 108-123, 143-158, 176-191, 215-230, 255-270, 293-308, 331-346, 368-383, 402-417, 439-454, 475-490, 510-525, 548-563, 586-601, 624-639, 658-673, 697-712, 736-751, 769-784, 805-820, 842-857, 880-895, 917-932, 951-966, 982-997, 1020-1035, and 1055-1070; these read GEVQSMRWIFENWALD, GDVKSTSLRFENQSVN, GDVHTARWLFETQPLD, GDVKGAKELFEAQSLD, GDVKKTIRLFQTEPLC, NAVRTARWLFETQPLD, PDVSGARWIFETQPLD, ADVTKQRLLFGTQALD, GDVKSTLWLFETQPME, GDVKQRKHVFETCPLG, GDVKSFKTLFETLPLD, GNVKANQILFETTPLY, GDVKKYKWMFETRPLD, GDVRTAKWLFETQPMD, GDVKTCRWLFETQPMH, ADVKSYTWMFETQPLD, VDVKTVRHLFETEPLG, GEVSRVKEFFEAKPLD, GSVHKFTWLFENYPMD, GDVGGKRFIFETYSLD, ANVKSCTMLFESQPLY, GDVKGARWLFETKPLD, GDVQAARWRFETEPLD, GDVQSNKQLFESQQVG, GDVRTSTWLFENQPVD, GDVKRCTWLFETQPMD, and ADVKSTTWLFESTPLD. The segment covering 1514–1565 has biased composition (polar residues); it reads ASKQETKTLQSTIHQQESASTMRENTSTAIRTSTTRVQEASRTHTSVSQKSI. Disordered stretches follow at residues 1514–1568, 1715–1856, and 1914–1941; these read ASKQ…IASH, ASGS…PPPA, and YKARKGGQGKFELDRAKPSKPVKNGEVG. The segment covering 1820 to 1833 has biased composition (low complexity); it reads SASTNNSTNRSTKS. Pro residues predominate over residues 1834–1843; that stretch reads VPPPVPPKPP.

This sequence belongs to the Xin family. In terms of tissue distribution, expressed at intercalated disks in the heart (at protein level).

The protein localises to the cell junction. It localises to the adherens junction. Its subcellular location is the desmosome. Its function is as follows. Involved in cardiac morphogenesis, including heart midline formation, cardiac tubule looping, myocardial formation and maintenance of heart beat speed and rhythm. May protect actin filaments from depolymerization. May play a role in development of normal skeletal muscle morphology, muscle fiber type composition and regulation of muscle satellite cell activation and survival. The protein is Xin actin-binding repeat-containing protein 1 of Gallus gallus (Chicken).